The following is a 753-amino-acid chain: Neuroendocrine convertase 1 (753 aa).

The first 27 residues, 1-27 (MEQRGWTLQCTAFAFFCVWCALSSVKA), serve as a signal peptide directing secretion. Residues 28-110 (KRQFVNEWAA…QQYEKERSKR (83 aa)) constitute a propeptide that is removed on maturation. In terms of domain architecture, Peptidase S8 spans 129 to 450 (QWYLQDTRMT…FGLLNAKALV (322 aa)). Residues D167 and H208 each act as charge relay system in the active site. Disulfide bonds link C225/C374 and C317/C347. S382 functions as the Charge relay system in the catalytic mechanism. A glycan (N-linked (GlcNAc...) asparagine) is linked at N401. The 138-residue stretch at 460–597 (NVPEKKECVV…KLILHGTSSQ (138 aa)) folds into the P/Homo B domain. A disulfide bridge links C467 with C494. A compositionally biased stretch (polar residues) spans 633–651 (QKSLNGNLLVPKNSSSSNV). The tract at residues 633–663 (QKSLNGNLLVPKNSSSSNVEGRRDEQVQGTP) is disordered. N645 carries N-linked (GlcNAc...) asparagine glycosylation.

Belongs to the peptidase S8 family. Furin subfamily. It depends on Ca(2+) as a cofactor.

The protein resides in the cytoplasmic vesicle. It localises to the secretory vesicle. The catalysed reaction is Release of protein hormones, neuropeptides and renin from their precursors, generally by hydrolysis of -Lys-Arg-|- bonds.. In terms of biological role, involved in the processing of hormone and other protein precursors at sites comprised of pairs of basic amino acid residues. Substrates include POMC, renin, enkephalin, dynorphin, somatostatin, insulin and AGRP. The sequence is that of Neuroendocrine convertase 1 (Pcsk1) from Mus cookii (Cook's mouse).